The sequence spans 661 residues: Acyl-coenzyme A oxidase acox-1.2 (661 aa).

Residues 147–150 (YAQT), 155–156 (GS), and Gly-189 contribute to the FAD site. Residues 283 to 286 (KIGY) and Arg-293 each bind substrate. Residues Arg-318 and 338–341 (QQHR) contribute to the FAD site. ATP is bound by residues His-340, Ser-390, His-394, and Gln-402. Gly-409 contributes to the FAD binding site. Residue 431–432 (YE) coordinates substrate. Catalysis depends on Glu-432, which acts as the Proton acceptor. Residue Glu-434 participates in FAD binding. Residues 525 to 528 (RASR) and Tyr-573 contribute to the ATP site. The short motif at 659 to 661 (AKL) is the Microbody targeting signal element.

The protein belongs to the acyl-CoA oxidase family. In terms of assembly, homodimer. Forms a heterodimer with acox-1.1. Requires FAD as cofactor.

Its subcellular location is the peroxisome. The catalysed reaction is asc-omegaC5-CoA + O2 = asc-omegaDeltaC5-CoA + H2O2. Its pathway is lipid metabolism; peroxisomal fatty acid beta-oxidation. Its activity is regulated as follows. Activated by ATP. ATP binding leads to a conformational change that promotes FAD cofactor binding and enzyme activity. ATP binding likely occurs during acox-1.2 folding and/or dimer formation. The preference for processing substrates with shorter fatty acid chains is likely due to the closed conformation of the active site. Its function is as follows. Involved in the first step of peroxisomal beta-oxidation by catalyzing the desaturation of fatty acid-derived side chains of ascaroside pheromones, which regulates development and behavior. Specifically, shortens ascarosides with 5-carbon omega side chain (asc-omega-C5). Does not shorten indol-3-carbonyl(IC)-ascaroside with 7-carbon or 9-carbon side chains. Does not catalyze the desaturation of fatty acids or hydroxylated fatty acids. This is Acyl-coenzyme A oxidase acox-1.2 from Caenorhabditis elegans.